A 361-amino-acid polypeptide reads, in one-letter code: UDP-N-acetylglucosamine--N-acetylmuramyl-(pentapeptide) pyrophosphoryl-undecaprenol N-acetylglucosamine transferase (361 aa).

Residues 21 to 23, Asn-131, Arg-172, Ser-195, Ile-250, and Gln-295 contribute to the UDP-N-acetyl-alpha-D-glucosamine site; that span reads TGG.

It belongs to the glycosyltransferase 28 family. MurG subfamily.

Its subcellular location is the cell inner membrane. It carries out the reaction di-trans,octa-cis-undecaprenyl diphospho-N-acetyl-alpha-D-muramoyl-L-alanyl-D-glutamyl-meso-2,6-diaminopimeloyl-D-alanyl-D-alanine + UDP-N-acetyl-alpha-D-glucosamine = di-trans,octa-cis-undecaprenyl diphospho-[N-acetyl-alpha-D-glucosaminyl-(1-&gt;4)]-N-acetyl-alpha-D-muramoyl-L-alanyl-D-glutamyl-meso-2,6-diaminopimeloyl-D-alanyl-D-alanine + UDP + H(+). Its pathway is cell wall biogenesis; peptidoglycan biosynthesis. In terms of biological role, cell wall formation. Catalyzes the transfer of a GlcNAc subunit on undecaprenyl-pyrophosphoryl-MurNAc-pentapeptide (lipid intermediate I) to form undecaprenyl-pyrophosphoryl-MurNAc-(pentapeptide)GlcNAc (lipid intermediate II). In Solibacter usitatus (strain Ellin6076), this protein is UDP-N-acetylglucosamine--N-acetylmuramyl-(pentapeptide) pyrophosphoryl-undecaprenol N-acetylglucosamine transferase.